The primary structure comprises 127 residues: uncharacterized protein (127 aa).

Transmembrane regions (helical) follow at residues alanine 16–isoleucine 36, leucine 59–phenylalanine 79, and isoleucine 100–isoleucine 120.

The protein localises to the cell membrane. This is an uncharacterized protein from Methanocaldococcus jannaschii (strain ATCC 43067 / DSM 2661 / JAL-1 / JCM 10045 / NBRC 100440) (Methanococcus jannaschii).